The chain runs to 66 residues: Protein translocase subunit SecE (66 aa).

A helical transmembrane segment spans residues 29–49 (LVASTLVVVVAVFIFSLICLV).

It belongs to the SecE/SEC61-gamma family. Component of the Sec protein translocase complex. Heterotrimer consisting of SecY, SecE and SecG subunits. The heterotrimers can form oligomers, although 1 heterotrimer is thought to be able to translocate proteins. Interacts with the ribosome. Interacts with SecDF, and other proteins may be involved. Interacts with SecA.

It localises to the cell inner membrane. In terms of biological role, essential subunit of the Sec protein translocation channel SecYEG. Clamps together the 2 halves of SecY. May contact the channel plug during translocation. This is Protein translocase subunit SecE from Rickettsia felis (strain ATCC VR-1525 / URRWXCal2) (Rickettsia azadi).